A 191-amino-acid polypeptide reads, in one-letter code: Chromobox protein homolog 5 (191 aa).

Phosphoserine is present on residues S11, S12, S13, and S14. The Chromo 1 domain occupies 20-78 (YVVEKVLDRRVVKGQVEYLLKWKGFSEEHNTWEPEKNLDCPELISEFMKKYKKMKEGEN). Residue K32 forms a Glycyl lysine isopeptide (Lys-Gly) (interchain with G-Cter in SUMO2) linkage. Residue K40 is modified to N6-acetyllysine. Residues 70–117 (YKKMKEGENNKPREKSESNKRKSNFSNSADDIKSKKKREQSNDIARGF) form a disordered region. Basic and acidic residues predominate over residues 73 to 89 (MKEGENNKPREKSESNK). K91 is covalently cross-linked (Glycyl lysine isopeptide (Lys-Gly) (interchain with G-Cter in SUMO2)). Residues S92, S95, and S97 each carry the phosphoserine modification. Glycyl lysine isopeptide (Lys-Gly) (interchain with G-Cter in SUMO2) cross-links involve residues K102, K106, K154, and K184. Residues 121–179 (LEPEKIIGATDSCGDLMFLMKWKDTDEADLVLAKEANVKCPQIVIAFYEERLTWHAYPE) enclose the Chromo 2; shadow subtype domain.

In terms of assembly, homodimer. Interacts with histone H3 methylated at 'Lys-9'. Interacts (via Chromo 2; shadow subtype domain) with the MIS12 complex subunit NSL1; the interaction is direct, involves dimeric CBX5, and occurs during interphase. Interacts with POGZ; POGZ and PXVXL motif-containing proteins such as INCENP and TRIM28 compete for interaction with CBX5. Interacts with LRIF1 (via PxVxL motif). Interacts with INCENP. Interacts with TRIM24. Interacts (via the chromoshadow domain) with ATRX; the interaction is direct. Interacts (via the chromoshadow domain) with CHAF1A; the interaction is direct. Interacts (via the chromoshadow domain) with LBR; the interaction is direct. Interacts (via the chromoshadow domain) with NIPBL; the interaction is direct. Interacts (via the chromoshadow domain) with SP100; the interaction is direct. Interacts (via the chromoshadow domain) with STAM2; the interaction is direct. Interacts (via the chromoshadow domain) with TRIM28; the interaction is direct. Interacts (via the chromoshadow domain) with CBX3; the interaction is direct. Interacts with PRR14 (via N-terminus). Interacts with RRP1B. Interacts with HNRNPU (via C-terminus); this interaction is, at least in part, RNA-dependent. Interacts with ZNF263; recruited to the SIX3 promoter along with other proteins involved in chromatin modification and transcriptional corepression where it contributes to transcriptional repression. Interacts with AURKB during mitosis. Interacts with CHAMP1. Interacts with BAHD1. Interacts with HP1BP3. Interacts with CHD3. Interacts with CHD4. Interacts with SMYD5. Interacts with KMT5B. Interacts with KMT5C. (Microbial infection) Interacts with JC virus agnoprotein; this interaction induces the dissociation of CBX5 from LBR, resulting in destabilization of the nuclear envelope. Post-translationally, phosphorylation of HP1 and LBR may be responsible for some of the alterations in chromatin organization and nuclear structure which occur at various times during the cell cycle. Phosphorylated during interphase and possibly hyper-phosphorylated during mitosis. In terms of processing, ubiquitinated.

It is found in the nucleus. It localises to the chromosome. Its subcellular location is the centromere. Functionally, component of heterochromatin that recognizes and binds histone H3 tails methylated at 'Lys-9' (H3K9me), leading to epigenetic repression. In contrast, it is excluded from chromatin when 'Tyr-41' of histone H3 is phosphorylated (H3Y41ph). May contribute to the association of heterochromatin with the inner nuclear membrane by interactions with the lamin-B receptor (LBR). Involved in the formation of kinetochore through interaction with the MIS12 complex subunit NSL1. Required for the formation of the inner centromere. The sequence is that of Chromobox protein homolog 5 (CBX5) from Homo sapiens (Human).